The chain runs to 227 residues: Nudix hydrolase 27, chloroplastic (227 aa).

A chloroplast-targeting transit peptide spans 1–44 (MAVKASGFIGKSAISVHLDFSSFPVKFSCLKQFSVSSPKPLVVL). The Nudix hydrolase domain maps to 61–208 (GYRKNVGICL…KRPVYEHVIK (148 aa)). Residues 94 to 115 (GGADEGEDLRNAAFRELREETG) carry the Nudix box motif. 2 residues coordinate Mn(2+): Glu109 and Glu113.

This sequence belongs to the Nudix hydrolase family. Mg(2+) serves as cofactor. Mn(2+) is required as a cofactor. As to expression, expressed in roots, leaves, stems and inflorescences.

It localises to the plastid. The protein localises to the chloroplast. Its function is as follows. Mediates the hydrolysis of some nucleoside diphosphate derivatives. Can use diadenosine 5',5'''-P(1)P(5) pentaphosphate (Ap(5)A) as substrates. The protein is Nudix hydrolase 27, chloroplastic (NUDT27) of Arabidopsis thaliana (Mouse-ear cress).